The following is a 52-amino-acid chain: Large ribosomal subunit protein bL32c (52 aa).

Belongs to the bacterial ribosomal protein bL32 family.

It localises to the plastid. It is found in the chloroplast. The polypeptide is Large ribosomal subunit protein bL32c (Nymphaea alba (White water-lily)).